The chain runs to 728 residues: Fatty acid oxidation complex subunit alpha (728 aa).

Positions 1 to 189 are enoyl-CoA hydratase/isomerase; the sequence is MLYQSETIQV…KNGLIDAVVP (189 aa). Asp-296 lines the substrate pocket. Residues 311-728 form a 3-hydroxyacyl-CoA dehydrogenase region; it reads TIPEYAAVLG…TIAVSTGKTA (418 aa). NAD(+) contacts are provided by residues Met-324, Asp-343, 400–402, Lys-407, and Ser-429; that span reads VVE. The For 3-hydroxyacyl-CoA dehydrogenase activity role is filled by His-450. Residue Asn-453 coordinates NAD(+). Substrate-binding residues include Asn-500 and Tyr-660.

The protein in the N-terminal section; belongs to the enoyl-CoA hydratase/isomerase family. In the C-terminal section; belongs to the 3-hydroxyacyl-CoA dehydrogenase family. In terms of assembly, heterotetramer of two alpha chains (FadB) and two beta chains (FadA).

The enzyme catalyses a (3S)-3-hydroxyacyl-CoA + NAD(+) = a 3-oxoacyl-CoA + NADH + H(+). The catalysed reaction is a (3S)-3-hydroxyacyl-CoA = a (2E)-enoyl-CoA + H2O. It carries out the reaction a 4-saturated-(3S)-3-hydroxyacyl-CoA = a (3E)-enoyl-CoA + H2O. It catalyses the reaction (3S)-3-hydroxybutanoyl-CoA = (3R)-3-hydroxybutanoyl-CoA. The enzyme catalyses a (3Z)-enoyl-CoA = a 4-saturated (2E)-enoyl-CoA. The catalysed reaction is a (3E)-enoyl-CoA = a 4-saturated (2E)-enoyl-CoA. Its pathway is lipid metabolism; fatty acid beta-oxidation. Functionally, involved in the aerobic and anaerobic degradation of long-chain fatty acids via beta-oxidation cycle. Catalyzes the formation of 3-oxoacyl-CoA from enoyl-CoA via L-3-hydroxyacyl-CoA. It can also use D-3-hydroxyacyl-CoA and cis-3-enoyl-CoA as substrate. The chain is Fatty acid oxidation complex subunit alpha from Photorhabdus laumondii subsp. laumondii (strain DSM 15139 / CIP 105565 / TT01) (Photorhabdus luminescens subsp. laumondii).